Reading from the N-terminus, the 901-residue chain is HTH-type transcriptional regulator MalT (901 aa).

Residue 39-46 participates in ATP binding; the sequence is SPAGYGKT. The 66-residue stretch at 829 to 894 folds into the HTH luxR-type domain; the sequence is ELIRTSPLTQ…DAVQHAQQLL (66 aa). The segment at residues 853–872 is a DNA-binding region (H-T-H motif); it reads NEQIAGELAVAATTIKTHIR.

The protein belongs to the MalT family. As to quaternary structure, monomer in solution. Oligomerizes to an active state in the presence of the positive effectors ATP and maltotriose.

Activated by ATP and maltotriose, which are both required for DNA binding. Positively regulates the transcription of the maltose regulon whose gene products are responsible for uptake and catabolism of malto-oligosaccharides. Specifically binds to the promoter region of its target genes, recognizing a short DNA motif called the MalT box. This Salmonella typhimurium (strain LT2 / SGSC1412 / ATCC 700720) protein is HTH-type transcriptional regulator MalT.